A 690-amino-acid chain; its full sequence is Methionine--tRNA ligase (690 aa).

The short motif at 20–30 (PYANGSIHLGH) is the 'HIGH' region element. Residues Cys151, Cys154, Cys164, and Cys167 each contribute to the Zn(2+) site. The short motif at 337–341 (KMSKS) is the 'KMSKS' region element. Position 340 (Lys340) interacts with ATP. Residues 589 to 690 (DFAKVDLRIA…EGAQPGMRVM (102 aa)) enclose the tRNA-binding domain.

This sequence belongs to the class-I aminoacyl-tRNA synthetase family. MetG type 1 subfamily. Homodimer. Zn(2+) serves as cofactor.

The protein localises to the cytoplasm. It carries out the reaction tRNA(Met) + L-methionine + ATP = L-methionyl-tRNA(Met) + AMP + diphosphate. Is required not only for elongation of protein synthesis but also for the initiation of all mRNA translation through initiator tRNA(fMet) aminoacylation. This is Methionine--tRNA ligase from Vibrio vulnificus (strain CMCP6).